A 186-amino-acid chain; its full sequence is Lactoylglutathione lyase (186 aa).

A VOC domain is found at 28-175; the sequence is FMQQTMFRIK…DGYWIELFDR (148 aa). Positions 31 and 35 each coordinate substrate. Zn(2+) is bound at residue glutamine 31. Zn(2+) is bound at residue glutamate 97. Residues asparagine 101, arginine 121, histidine 125, and 155 to 156 each bind substrate; that span reads KM. Histidine 125 is a Zn(2+) binding site. Glutamate 171 contributes to the Zn(2+) binding site. Glutamate 171 acts as the Proton donor/acceptor in catalysis.

The protein belongs to the glyoxalase I family. The cofactor is Zn(2+).

It carries out the reaction (R)-S-lactoylglutathione = methylglyoxal + glutathione. Its pathway is secondary metabolite metabolism; methylglyoxal degradation; (R)-lactate from methylglyoxal: step 1/2. In terms of biological role, catalyzes the conversion of hemimercaptal, formed from methylglyoxal and glutathione, to S-lactoylglutathione. The polypeptide is Lactoylglutathione lyase (Cicer arietinum (Chickpea)).